The chain runs to 589 residues: TAF5-like RNA polymerase II p300/CBP-associated factor-associated factor 65 kDa subunit 5L (589 aa).

Residues 211 to 221 are compositionally biased toward polar residues; it reads ASGSSSRSENN. A disordered region spans residues 211-230; it reads ASGSSSRSENNGLEPPDMPS. WD repeat units follow at residues 266-305, 340-379, 382-421, 424-463, 466-505, and 508-547; these read NTEQLLNTAEISPDSKLLAAGFDNSCIKLWSLRSKKLKSE, GHCGPVYSTRFLADSSGLLSCSEDMSIRYWDLGSFTNTVL, GHAYPVWDLDISPYSLYFASGSHDRTARLWSFDRTYPLRI, GHLADVDCVKFHPNSNYLATGSTDKTVRLWSAQQGNSVRL, GHRGPVLSLAFSPNGKYLASAGEDQRLKLWDLASGTLYKE, and GHTDNITSLTFSPDSGLIASASMDNSVRVWDIRNTYCSAP.

The protein belongs to the WD repeat TAF5 family. In terms of assembly, the PCAF complex is composed of a number of TBP-associated factors (TAFS), such as TAF5, TAF5L, TAF6, TAF6L, TAF9, TAF10 and TAF12, PCAF, and also PCAF-associated factors (PAFs), such as TADA2L/ADA2, TADA3L/ADA3 and SPT3. Component of the STAGA transcription coactivator-HAT complex, at least composed of SUPT3H, GCN5L2, TAF5L, TAF6L, SUPT7L, TADA3L, TAD1L, TAF10, TAF12, TRRAP and TAF9.

It localises to the nucleus. Its function is as follows. Functions as a component of the PCAF complex. The PCAF complex is capable of efficiently acetylating histones in a nucleosomal context. The PCAF complex could be considered as the human version of the yeast SAGA complex. With TAF6L, acts as an epigenetic regulator essential for somatic reprogramming. Regulates target genes through H3K9ac deposition and MYC recruitment which trigger MYC regulatory network to orchestrate gene expression programs to control embryonic stem cell state. In Homo sapiens (Human), this protein is TAF5-like RNA polymerase II p300/CBP-associated factor-associated factor 65 kDa subunit 5L.